Reading from the N-terminus, the 143-residue chain is ATP synthase subunit 9, mitochondrial (143 aa).

Residues 1 to 62 (MAASRVFAQR…ARQAFAARRQ (62 aa)) constitute a mitochondrion transit peptide. 2 helical membrane passes run 85–105 (IGLG…LLAV) and 119–139 (AILG…VAMM).

Belongs to the ATPase C chain family. In terms of assembly, F-type ATPases have 2 components, CF(1) - the catalytic core - and CF(0) - the membrane proton channel. CF(1) has five subunits: alpha(3), beta(3), gamma(1), delta(1), epsilon(1). CF(0) has three main subunits: a, b and c.

It is found in the mitochondrion membrane. Functionally, mitochondrial membrane ATP synthase (F(1)F(0) ATP synthase or Complex V) produces ATP from ADP in the presence of a proton gradient across the membrane which is generated by electron transport complexes of the respiratory chain. F-type ATPases consist of two structural domains, F(1) - containing the extramembraneous catalytic core and F(0) - containing the membrane proton channel, linked together by a central stalk and a peripheral stalk. During catalysis, ATP synthesis in the catalytic domain of F(1) is coupled via a rotary mechanism of the central stalk subunits to proton translocation. Part of the complex F(0) domain. A homomeric c-ring of probably 10 subunits is part of the complex rotary element. This is ATP synthase subunit 9, mitochondrial (atp9) from Emericella nidulans (strain FGSC A4 / ATCC 38163 / CBS 112.46 / NRRL 194 / M139) (Aspergillus nidulans).